The primary structure comprises 175 residues: Adenine phosphoribosyltransferase (175 aa).

This sequence belongs to the purine/pyrimidine phosphoribosyltransferase family. Homodimer.

It localises to the cytoplasm. The catalysed reaction is AMP + diphosphate = 5-phospho-alpha-D-ribose 1-diphosphate + adenine. It participates in purine metabolism; AMP biosynthesis via salvage pathway; AMP from adenine: step 1/1. Its function is as follows. Catalyzes a salvage reaction resulting in the formation of AMP, that is energically less costly than de novo synthesis. The polypeptide is Adenine phosphoribosyltransferase (Thermosipho melanesiensis (strain DSM 12029 / CIP 104789 / BI429)).